We begin with the raw amino-acid sequence, 205 residues long: Ribosomal RNA small subunit methyltransferase G (205 aa).

S-adenosyl-L-methionine-binding positions include G76, L81, 127–128, and R140; that span reads IE.

This sequence belongs to the methyltransferase superfamily. RNA methyltransferase RsmG family.

It is found in the cytoplasm. The enzyme catalyses guanosine(527) in 16S rRNA + S-adenosyl-L-methionine = N(7)-methylguanosine(527) in 16S rRNA + S-adenosyl-L-homocysteine. Functionally, specifically methylates the N7 position of guanine in position 527 of 16S rRNA. The sequence is that of Ribosomal RNA small subunit methyltransferase G from Francisella tularensis subsp. novicida (strain U112).